Consider the following 403-residue polypeptide: Phosphopentomutase (403 aa).

6 residues coordinate Mn(2+): D13, D298, H303, D339, H340, and H351.

This sequence belongs to the phosphopentomutase family. Mn(2+) is required as a cofactor.

The protein resides in the cytoplasm. It catalyses the reaction 2-deoxy-alpha-D-ribose 1-phosphate = 2-deoxy-D-ribose 5-phosphate. It carries out the reaction alpha-D-ribose 1-phosphate = D-ribose 5-phosphate. The protein operates within carbohydrate degradation; 2-deoxy-D-ribose 1-phosphate degradation; D-glyceraldehyde 3-phosphate and acetaldehyde from 2-deoxy-alpha-D-ribose 1-phosphate: step 1/2. In terms of biological role, isomerase that catalyzes the conversion of deoxy-ribose 1-phosphate (dRib-1-P) and ribose 1-phosphate (Rib-1-P) to deoxy-ribose 5-phosphate (dRib-5-P) and ribose 5-phosphate (Rib-5-P), respectively. The chain is Phosphopentomutase from Streptococcus uberis (strain ATCC BAA-854 / 0140J).